The following is a 585-amino-acid chain: Aspartate--tRNA ligase (585 aa).

Glu-171 contacts L-aspartate. Residues 195–198 are aspartate; sequence QLFK. Arg-217 is a binding site for L-aspartate. Residues 217–219 and Gln-226 contribute to the ATP site; that span reads RDE. His-448 provides a ligand contact to L-aspartate. Glu-482 serves as a coordination point for ATP. L-aspartate is bound at residue Arg-489. 534-537 is an ATP binding site; it reads GLDR.

The protein belongs to the class-II aminoacyl-tRNA synthetase family. Type 1 subfamily. As to quaternary structure, homodimer.

The protein localises to the cytoplasm. It catalyses the reaction tRNA(Asp) + L-aspartate + ATP = L-aspartyl-tRNA(Asp) + AMP + diphosphate. Its function is as follows. Catalyzes the attachment of L-aspartate to tRNA(Asp) in a two-step reaction: L-aspartate is first activated by ATP to form Asp-AMP and then transferred to the acceptor end of tRNA(Asp). This chain is Aspartate--tRNA ligase, found in Histophilus somni (strain 129Pt) (Haemophilus somnus).